The primary structure comprises 743 residues: Threonine synthase-like 1 (743 aa).

The residue at position 281 (Lys-281) is an N6-acetyllysine. At Lys-351 the chain carries N6-(pyridoxal phosphate)lysine.

The protein belongs to the threonine synthase family. It depends on pyridoxal 5'-phosphate as a cofactor.

The sequence is that of Threonine synthase-like 1 (THNSL1) from Homo sapiens (Human).